The following is a 93-amino-acid chain: Large ribosomal subunit protein uL23 (93 aa).

It belongs to the universal ribosomal protein uL23 family. In terms of assembly, part of the 50S ribosomal subunit. Contacts protein L29, and trigger factor when it is bound to the ribosome.

Its function is as follows. One of the early assembly proteins it binds 23S rRNA. One of the proteins that surrounds the polypeptide exit tunnel on the outside of the ribosome. Forms the main docking site for trigger factor binding to the ribosome. The protein is Large ribosomal subunit protein uL23 of Sulfurovum sp. (strain NBC37-1).